Consider the following 715-residue polypeptide: uncharacterized protein (715 aa).

Residues V688–F708 traverse the membrane as a helical segment.

This sequence belongs to the plectrovirus ORF1 family.

It localises to the host membrane. This is an uncharacterized protein from Spiroplasma virus SpV1-R8A2 B (SpV1).